A 510-amino-acid polypeptide reads, in one-letter code: ATP synthase subunit alpha (510 aa).

Glycine 169–threonine 176 serves as a coordination point for ATP.

Belongs to the ATPase alpha/beta chains family. In terms of assembly, F-type ATPases have 2 components, CF(1) - the catalytic core - and CF(0) - the membrane proton channel. CF(1) has five subunits: alpha(3), beta(3), gamma(1), delta(1), epsilon(1). CF(0) has three main subunits: a(1), b(2) and c(9-12). The alpha and beta chains form an alternating ring which encloses part of the gamma chain. CF(1) is attached to CF(0) by a central stalk formed by the gamma and epsilon chains, while a peripheral stalk is formed by the delta and b chains.

Its subcellular location is the cell inner membrane. It catalyses the reaction ATP + H2O + 4 H(+)(in) = ADP + phosphate + 5 H(+)(out). Produces ATP from ADP in the presence of a proton gradient across the membrane. The alpha chain is a regulatory subunit. This Rickettsia peacockii (strain Rustic) protein is ATP synthase subunit alpha.